The sequence spans 240 residues: Small ribosomal subunit protein uS3 (240 aa).

The region spanning 39 to 109 (IRQYIEKTLN…QIRVNVIEVP (71 aa)) is the KH type-2 domain. A disordered region spans residues 219-240 (APPSQPRRKSRRQQFDDRSQDG). A compositionally biased stretch (basic and acidic residues) spans 231-240 (QQFDDRSQDG).

This sequence belongs to the universal ribosomal protein uS3 family. In terms of assembly, part of the 30S ribosomal subunit. Forms a tight complex with proteins S10 and S14.

Functionally, binds the lower part of the 30S subunit head. Binds mRNA in the 70S ribosome, positioning it for translation. This is Small ribosomal subunit protein uS3 from Synechocystis sp. (strain ATCC 27184 / PCC 6803 / Kazusa).